Here is a 74-residue protein sequence, read N- to C-terminus: Small ribosomal subunit protein bS21 (74 aa).

This sequence belongs to the bacterial ribosomal protein bS21 family.

This chain is Small ribosomal subunit protein bS21, found in Coxiella burnetii (strain Dugway 5J108-111).